The following is a 281-amino-acid chain: 3-hydroxyanthranilate 3,4-dioxygenase (281 aa).

The segment at 1-162 is domain A (catalytic); the sequence is MAGVTAIEIP…SNEFKTGKPG (162 aa). Arginine 45 contacts O2. Fe cation contacts are provided by histidine 49, glutamate 55, and histidine 93. Glutamate 55 provides a ligand contact to substrate. The substrate site is built by arginine 97 and glutamate 107. The tract at residues 163-179 is linker; the sequence is KGTFACNAPYEARWTDL. The domain B stretch occupies residues 180–281; that stretch reads PVPINRKEFI…GFAITIRMPG (102 aa).

Belongs to the 3-HAO family. The cofactor is Fe(2+).

It localises to the cytoplasm. It catalyses the reaction 3-hydroxyanthranilate + O2 = (2Z,4Z)-2-amino-3-carboxymuconate 6-semialdehyde. Its pathway is cofactor biosynthesis; NAD(+) biosynthesis; quinolinate from L-kynurenine: step 3/3. Its function is as follows. Catalyzes the oxidative ring opening of 3-hydroxyanthranilate to 2-amino-3-carboxymuconate semialdehyde, which spontaneously cyclizes to quinolinate. The polypeptide is 3-hydroxyanthranilate 3,4-dioxygenase (haao-1) (Caenorhabditis briggsae).